Consider the following 830-residue polypeptide: Kinesin-like protein KIN-14B (830 aa).

Residues 56–97 (ENISDDNTESEAKVQKIQDELVSLNAQLKQITLQRREALNNY) are a coiled coil. The 323-residue stretch at 103 to 425 (NIRVFCRIRP…LGFATRVRSI (323 aa)) folds into the Kinesin motor domain. 182-189 (GQTGSGKT) is an ATP binding site. A coiled-coil region spans residues 434–476 (EMKARKETLLIDLGQKVNDLEHECEDIRRKIKNLEESMEHLTG).

The protein belongs to the TRAFAC class myosin-kinesin ATPase superfamily. Kinesin family. KIN-14 subfamily.

The polypeptide is Kinesin-like protein KIN-14B (Oryza sativa subsp. japonica (Rice)).